Consider the following 327-residue polypeptide: MSFVAHPNIDPKSLGKVGVLLGGRSAEREISLMSGNGVLAALQSRGVDAHGFDPGLQSVAELAAAGFDRVFIALHGRYGEDGTIQGLLEQLGVPYTGSGVLASAMAMDKQATKRLWMTYGLATPRFAMLHADTDFDAVAADLGLPLIVKPAREGSSIGLTKVTAADQMRAAFEKAAALDNDVIAETFIDGAELTCPIVGEGDSAEALPVIRIVAPEANYDYQNKYFTDDTQYLCPSGLDPEVEREVRALAVQSYRVLGCRGWARADLMLRADGKPFLLEMNTSPGMTGHSLVPMAARAVGISYEDFVMQVVAAATLDLHPNEHWKPE.

The ATP-grasp domain maps to 113–312; the sequence is KRLWMTYGLA…YEDFVMQVVA (200 aa). 139-194 is an ATP binding site; sequence AADLGLPLIVKPAREGSSIGLTKVTAADQMRAAFEKAAALDNDVIAETFIDGAELT. Mg(2+)-binding residues include Asp-266, Glu-279, and Asn-281.

The protein belongs to the D-alanine--D-alanine ligase family. Requires Mg(2+) as cofactor. It depends on Mn(2+) as a cofactor.

It is found in the cytoplasm. It catalyses the reaction 2 D-alanine + ATP = D-alanyl-D-alanine + ADP + phosphate + H(+). Its pathway is cell wall biogenesis; peptidoglycan biosynthesis. In terms of biological role, cell wall formation. The protein is D-alanine--D-alanine ligase of Cupriavidus necator (strain ATCC 17699 / DSM 428 / KCTC 22496 / NCIMB 10442 / H16 / Stanier 337) (Ralstonia eutropha).